A 683-amino-acid polypeptide reads, in one-letter code: DNA ligase (683 aa).

NAD(+) contacts are provided by residues Asp43 to Asp47, Ser92 to Leu93, and Glu125. Lys127 acts as the N6-AMP-lysine intermediate in catalysis. NAD(+) contacts are provided by Arg148, Glu185, Lys303, and Lys327. 4 residues coordinate Zn(2+): Cys421, Cys424, Cys439, and Cys445. In terms of domain architecture, BRCT spans Ile604–Asn683.

The protein belongs to the NAD-dependent DNA ligase family. LigA subfamily. It depends on Mg(2+) as a cofactor. Requires Mn(2+) as cofactor.

The enzyme catalyses NAD(+) + (deoxyribonucleotide)n-3'-hydroxyl + 5'-phospho-(deoxyribonucleotide)m = (deoxyribonucleotide)n+m + AMP + beta-nicotinamide D-nucleotide.. In terms of biological role, DNA ligase that catalyzes the formation of phosphodiester linkages between 5'-phosphoryl and 3'-hydroxyl groups in double-stranded DNA using NAD as a coenzyme and as the energy source for the reaction. It is essential for DNA replication and repair of damaged DNA. The chain is DNA ligase from Actinobacillus pleuropneumoniae serotype 5b (strain L20).